We begin with the raw amino-acid sequence, 96 residues long: ELAVIALLIFLFFKTEFNMLLRNTVDLANDPIKQFTSTSLTCKGNALFIKHMPNSTELKPALAINRKQIVHENCAALLQSINGSRKVSLNDILERR.

This Myxoma virus (strain Uriarra) (MYXV) protein is MF6 protein.